The primary structure comprises 651 residues: tRNA uridine 5-carboxymethylaminomethyl modification enzyme MnmG (651 aa).

Position 11–16 (11–16) interacts with FAD; it reads GAGHAG. Residue 296–310 participates in NAD(+) binding; it reads GPRYCPSIEDKIVRF.

It belongs to the MnmG family. As to quaternary structure, homodimer. Heterotetramer of two MnmE and two MnmG subunits. The cofactor is FAD.

Its subcellular location is the cytoplasm. NAD-binding protein involved in the addition of a carboxymethylaminomethyl (cmnm) group at the wobble position (U34) of certain tRNAs, forming tRNA-cmnm(5)s(2)U34. In Chloroflexus aurantiacus (strain ATCC 29366 / DSM 635 / J-10-fl), this protein is tRNA uridine 5-carboxymethylaminomethyl modification enzyme MnmG.